Consider the following 1638-residue polypeptide: DNA polymerase III PolC-type (1638 aa).

The segment at 193–212 is disordered; the sequence is SEIKKQRSEERESKNTREAK. A compositionally biased stretch (basic and acidic residues) spans 194 to 212; it reads EIKKQRSEERESKNTREAK. Residues 596 to 752 form the Exonuclease domain; it reads YVVFDVETTG…FDAEATGRLL (157 aa).

The protein belongs to the DNA polymerase type-C family. PolC subfamily.

It localises to the cytoplasm. It carries out the reaction DNA(n) + a 2'-deoxyribonucleoside 5'-triphosphate = DNA(n+1) + diphosphate. In terms of biological role, required for replicative DNA synthesis. This DNA polymerase also exhibits 3' to 5' exonuclease activity. The chain is DNA polymerase III PolC-type from Lactococcus lactis subsp. lactis (strain IL1403) (Streptococcus lactis).